A 425-amino-acid chain; its full sequence is Serine--tRNA ligase (425 aa).

231–233 (TAE) is a binding site for L-serine. ATP-binding positions include 262-264 (RTE) and Val-278. Glu-285 contacts L-serine. 349–352 (EVTS) serves as a coordination point for ATP. Residue Thr-384 coordinates L-serine.

It belongs to the class-II aminoacyl-tRNA synthetase family. Type-1 seryl-tRNA synthetase subfamily. Homodimer. The tRNA molecule binds across the dimer.

Its subcellular location is the cytoplasm. It carries out the reaction tRNA(Ser) + L-serine + ATP = L-seryl-tRNA(Ser) + AMP + diphosphate + H(+). It catalyses the reaction tRNA(Sec) + L-serine + ATP = L-seryl-tRNA(Sec) + AMP + diphosphate + H(+). It functions in the pathway aminoacyl-tRNA biosynthesis; selenocysteinyl-tRNA(Sec) biosynthesis; L-seryl-tRNA(Sec) from L-serine and tRNA(Sec): step 1/1. Functionally, catalyzes the attachment of serine to tRNA(Ser). Is also able to aminoacylate tRNA(Sec) with serine, to form the misacylated tRNA L-seryl-tRNA(Sec), which will be further converted into selenocysteinyl-tRNA(Sec). The protein is Serine--tRNA ligase of Dictyoglomus thermophilum (strain ATCC 35947 / DSM 3960 / H-6-12).